The sequence spans 329 residues: Probable tyrosine--tRNA ligase, cytoplasmic (329 aa).

Position 35 (Tyr-35) interacts with L-tyrosine. The short motif at 40–48 is the 'HIGH' region element; the sequence is TTGKPHIAY. L-tyrosine contacts are provided by Tyr-162, Gln-166, Asp-169, and Gln-184. Residues 218 to 222 carry the 'KMSKS' region motif; it reads KMSSS.

It belongs to the class-I aminoacyl-tRNA synthetase family. Homodimer.

It is found in the cytoplasm. The enzyme catalyses tRNA(Tyr) + L-tyrosine + ATP = L-tyrosyl-tRNA(Tyr) + AMP + diphosphate + H(+). The sequence is that of Probable tyrosine--tRNA ligase, cytoplasmic from Vairimorpha ceranae (strain BRL01) (Microsporidian parasite).